Consider the following 292-residue polypeptide: Protein SETSIP (292 aa).

Over residues Met1 to Leu11 the composition is skewed to low complexity. Disordered stretches follow at residues Met1–Glu43 and Leu158–Asp292. Positions Lys35 to Gln78 form a coiled coil. Acidic residues predominate over residues Asp237–Asp292.

This sequence belongs to the nucleosome assembly protein (NAP) family. As to expression, expressed in endothelial cell (EC) and protein-induced pluripotent stem (PiPS) endothelial cell (EC) (at protein level).

The protein resides in the cytoplasm. It is found in the nucleus. In terms of biological role, plays a role as a transcriptional activator involved in the early stage of somatic cell reprogramming. Promotes the differentiation of protein-induced pluripotent stem (PiPS) cells into endothelial cells and the formation of vascular-like tubes (in vitro). Involved in the transcription induction of vascular endothelial-cadherin (VE-cadherin) expression. Associates to the VE-cadherin gene promoter. The chain is Protein SETSIP (SETSIP) from Homo sapiens (Human).